Here is a 38-residue protein sequence, read N- to C-terminus: Beta-defensin 1 (38 aa).

3 disulfide bridges follow: Cys-5/Cys-34, Cys-12/Cys-27, and Cys-17/Cys-35.

Belongs to the beta-defensin family. As to quaternary structure, monomer. Homodimer. Neutrophilic granules.

It is found in the secreted. Its subcellular location is the membrane. Has bactericidal activity. Active against E.coli ML35 but not against S.aureus 502A. May act as a ligand for C-C chemokine receptor CCR6. Positively regulates the sperm motility and bactericidal activity in a CCR6-dependent manner. Binds to CCR6 and triggers Ca2+ mobilization in the sperm which is important for its motility. The chain is Beta-defensin 1 (DEFB1) from Bos taurus (Bovine).